The following is a 275-amino-acid chain: Large ribosomal subunit protein uL2 (275 aa).

The disordered stretch occupies residues 225-275 (MNPVDHPHGGGEGRSPIGRPPVTPWGKPALGTRTRNKKKASSKLIVKRRTK). The span at 258–275 (TRNKKKASSKLIVKRRTK) shows a compositional bias: basic residues.

This sequence belongs to the universal ribosomal protein uL2 family. Part of the 50S ribosomal subunit. Forms a bridge to the 30S subunit in the 70S ribosome.

Its function is as follows. One of the primary rRNA binding proteins. Required for association of the 30S and 50S subunits to form the 70S ribosome, for tRNA binding and peptide bond formation. It has been suggested to have peptidyltransferase activity; this is somewhat controversial. Makes several contacts with the 16S rRNA in the 70S ribosome. The polypeptide is Large ribosomal subunit protein uL2 (Desulforudis audaxviator (strain MP104C)).